Here is a 280-residue protein sequence, read N- to C-terminus: tRNA pseudouridine synthase A (280 aa).

D55 (nucleophile) is an active-site residue. Y110 is a binding site for substrate.

It belongs to the tRNA pseudouridine synthase TruA family.

The enzyme catalyses uridine(38/39/40) in tRNA = pseudouridine(38/39/40) in tRNA. Functionally, formation of pseudouridine at positions 38, 39 and 40 in the anticodon stem and loop of transfer RNAs. The polypeptide is tRNA pseudouridine synthase A (Methanosphaerula palustris (strain ATCC BAA-1556 / DSM 19958 / E1-9c)).